Consider the following 72-residue polypeptide: Small ribosomal subunit protein bS20 (72 aa).

This sequence belongs to the bacterial ribosomal protein bS20 family.

Functionally, binds directly to 16S ribosomal RNA. The chain is Small ribosomal subunit protein bS20 (rpsT) from Proteus mirabilis.